The following is a 494-amino-acid chain: UPF0371 protein SPT_0390 (494 aa).

It belongs to the UPF0371 family.

The chain is UPF0371 protein SPT_0390 from Streptococcus pneumoniae (strain Taiwan19F-14).